The primary structure comprises 2141 residues: Oxygen-regulated protein 1 (2141 aa).

Residues 1–10 (MSETSSTSVS) are compositionally biased toward polar residues. Residues 1-20 (MSETSSTSVSMIHRSFEGQG) form a disordered region. The region spanning 34–116 (KKISFYKSGD…RRKVQPVDLD (83 aa)) is the Doublecortin 1 domain. The segment at 126–149 (LSSRAISAHAQRSPPTSIGAAGAP) is disordered. A Doublecortin 2 domain is found at 156–235 (RRLLVFRNGD…REPFKPGNYD (80 aa)). Disordered regions lie at residues 259–278 (RSESRKMSTHVPSSPRSQIY), 1432–1458 (YTSSDKEDSKTSEEPGSITNSMTSSER), and 1589–1612 (DWSEFRPSSENEQPYKTSSDGPNG). Positions 268–278 (HVPSSPRSQIY) are enriched in polar residues. The segment covering 1435-1444 (SDKEDSKTSE) has biased composition (basic and acidic residues). Composition is skewed to polar residues over residues 1448–1458 (SITNSMTSSER) and 1598–1610 (ENEQPYKTSSDGP).

In terms of assembly, interacts (via the doublecortin domains) with microtubules. Interacts with RP1L1. Interacts with MAK.

Its subcellular location is the cytoplasm. It is found in the cytoskeleton. The protein localises to the cilium axoneme. It localises to the cell projection. The protein resides in the cilium. Its subcellular location is the photoreceptor outer segment. Its function is as follows. Microtubule-associated protein regulating the stability and length of the microtubule-based axoneme of photoreceptors. Required for the differentiation of photoreceptor cells, it plays a role in the organization of the outer segment of rod and cone photoreceptors ensuring the correct orientation and higher-order stacking of outer segment disks along the photoreceptor axoneme. The chain is Oxygen-regulated protein 1 (RP1) from Canis lupus familiaris (Dog).